Here is a 144-residue protein sequence, read N- to C-terminus: MKLNNLSPAPGSKHAEKRVGRGIGSGLGKTGGRGHKGQKSRSGGSVKPGFEGGQMPLQRRLPKYGFTSAKSLVSEEVRLAELAKVDGEIVDLESLKKANVLKDNTQYAKVILSGELNKAVTVRGLKVTKGARDAIAAAGGKVED.

The tract at residues 1 to 58 (MKLNNLSPAPGSKHAEKRVGRGIGSGLGKTGGRGHKGQKSRSGGSVKPGFEGGQMPLQ) is disordered. Positions 21–31 (RGIGSGLGKTG) are enriched in gly residues.

This sequence belongs to the universal ribosomal protein uL15 family. In terms of assembly, part of the 50S ribosomal subunit.

Binds to the 23S rRNA. The sequence is that of Large ribosomal subunit protein uL15 from Chromohalobacter salexigens (strain ATCC BAA-138 / DSM 3043 / CIP 106854 / NCIMB 13768 / 1H11).